The chain runs to 546 residues: Probable protein kinase UbiB (546 aa).

The Protein kinase domain maps to 124–502 (DFSVEPLASA…HVRQGQSRYL (379 aa)). ATP-binding positions include 130–138 (LASASIAQV) and Lys-153. Asp-288 serves as the catalytic Proton acceptor. The next 2 helical transmembrane spans lie at 501–521 (YLFG…IHRP) and 522–542 (EWGM…LIGW).

Belongs to the ABC1 family. UbiB subfamily.

Its subcellular location is the cell inner membrane. It participates in cofactor biosynthesis; ubiquinone biosynthesis [regulation]. In terms of biological role, is probably a protein kinase regulator of UbiI activity which is involved in aerobic coenzyme Q (ubiquinone) biosynthesis. The polypeptide is Probable protein kinase UbiB (Klebsiella pneumoniae subsp. pneumoniae (strain ATCC 700721 / MGH 78578)).